The primary structure comprises 368 residues: Chaperone protein DnaJ (368 aa).

The region spanning 5–70 (DYYQVLGVPR…KKRKLYDTHG (66 aa)) is the J domain. The CR-type zinc finger occupies 124 to 201 (GVERQIQIPT…CNGAGRVEDH (78 aa)). Positions 137, 140, 153, 156, 175, 178, 189, and 192 each coordinate Zn(2+). CXXCXGXG motif repeat units lie at residues 137-144 (CTHCNGSG), 153-160 (CGTCRGSG), 175-182 (CPHCGGRG), and 189-196 (CKVCNGAG).

It belongs to the DnaJ family. In terms of assembly, homodimer. Zn(2+) serves as cofactor.

The protein localises to the cytoplasm. In terms of biological role, participates actively in the response to hyperosmotic and heat shock by preventing the aggregation of stress-denatured proteins and by disaggregating proteins, also in an autonomous, DnaK-independent fashion. Unfolded proteins bind initially to DnaJ; upon interaction with the DnaJ-bound protein, DnaK hydrolyzes its bound ATP, resulting in the formation of a stable complex. GrpE releases ADP from DnaK; ATP binding to DnaK triggers the release of the substrate protein, thus completing the reaction cycle. Several rounds of ATP-dependent interactions between DnaJ, DnaK and GrpE are required for fully efficient folding. Also involved, together with DnaK and GrpE, in the DNA replication of plasmids through activation of initiation proteins. The chain is Chaperone protein DnaJ from Xylella fastidiosa (strain M12).